A 477-amino-acid polypeptide reads, in one-letter code: Glycogen synthase (477 aa).

Residue Lys15 participates in ADP-alpha-D-glucose binding.

This sequence belongs to the glycosyltransferase 1 family. Bacterial/plant glycogen synthase subfamily.

It carries out the reaction [(1-&gt;4)-alpha-D-glucosyl](n) + ADP-alpha-D-glucose = [(1-&gt;4)-alpha-D-glucosyl](n+1) + ADP + H(+). The protein operates within glycan biosynthesis; glycogen biosynthesis. Functionally, synthesizes alpha-1,4-glucan chains using ADP-glucose. The sequence is that of Glycogen synthase from Mannheimia succiniciproducens (strain KCTC 0769BP / MBEL55E).